Consider the following 493-residue polypeptide: MWLIRAIVPVRYLGSYKRPQKPPWMRNPVVFYSDFSEKKGKVAPLQETRMRDRFTLYARGGEGGSGCSSVRRSRADRYGKPDGGNGGRGGDVILECTHAVWDFSGLQPHIKGGKAGHGTSKNRIGNRGEDKVLLVPIGTVIHLQEGEIPSQVENESPKDLDPWDLPGSLVEDPASEENSDVHQETMSESDQDDTEQESLTRQLGMPKEADFEDDDEEIDQIRYNVAELTQQGQRVIIARGGEGGLGNVSATRYVRGSKFAKSTIRQTNLRSMEDDAEEDDERSSIKAGLLGSEAVLILELKSIADVGLVGMPNAGKSTLLGALSRAKPRVGHYAFTTLRPNLGNVNYDDFSMTVADIPGLIKGAHQNRGLGHNFLRHIERTKVLAYVVDLASGLDGCEGLTPWQQLRDLVMELEFHEEGLSDRSSLIVANKIDEEGAEERLKELKRRVKGVKIFPVCAVLEEGVAELKDGLKMLVDGNGEPSERLKLENICVD.

The N-terminal 28 residues, 1–28 (MWLIRAIVPVRYLGSYKRPQKPPWMRNP), are a transit peptide targeting the mitochondrion. Residues 48–303 (TRMRDRFTLY…AVLILELKSI (256 aa)) enclose the Obg domain. 2 disordered regions span residues 65–89 (SGCS…GGRG) and 146–215 (GEIP…EDDD). The segment covering 187–196 (SESDQDDTEQ) has biased composition (acidic residues). The region spanning 304-476 (ADVGLVGMPN…LKDGLKMLVD (173 aa)) is the OBG-type G domain. GTP-binding positions include 310-317 (GMPNAGKS) and 356-360 (DIPGL).

This sequence belongs to the TRAFAC class OBG-HflX-like GTPase superfamily. OBG GTPase family.

Its subcellular location is the mitochondrion. Its function is as follows. May bind GTP and have GTPase activity. The protein is Probable GTP-binding protein OBGM, mitochondrial (ATOBGM) of Arabidopsis thaliana (Mouse-ear cress).